The sequence spans 671 residues: DNA ligase (671 aa).

NAD(+) is bound by residues 32 to 36 (DAEYD), 81 to 82 (SL), and E113. K115 (N6-AMP-lysine intermediate) is an active-site residue. NAD(+) contacts are provided by R136, E173, K290, and K314. Zn(2+)-binding residues include C408, C411, C426, and C432. The region spanning 593-671 (EIDSPFAGKT…EAEMIRLLGA (79 aa)) is the BRCT domain.

Belongs to the NAD-dependent DNA ligase family. LigA subfamily. It depends on Mg(2+) as a cofactor. Mn(2+) serves as cofactor.

It carries out the reaction NAD(+) + (deoxyribonucleotide)n-3'-hydroxyl + 5'-phospho-(deoxyribonucleotide)m = (deoxyribonucleotide)n+m + AMP + beta-nicotinamide D-nucleotide.. In terms of biological role, DNA ligase that catalyzes the formation of phosphodiester linkages between 5'-phosphoryl and 3'-hydroxyl groups in double-stranded DNA using NAD as a coenzyme and as the energy source for the reaction. It is essential for DNA replication and repair of damaged DNA. The polypeptide is DNA ligase (Salmonella gallinarum (strain 287/91 / NCTC 13346)).